Here is a 374-residue protein sequence, read N- to C-terminus: Putative zinc finger MYND domain-containing protein R331 (374 aa).

8 residues coordinate Zn(2+): C328, C331, C341, C344, C350, C354, H362, and C366. The segment at 328 to 366 (CFYCNKNIEKPVVCNKCFRIKYCSEKCQSEYNSYHSDDC) adopts an MYND-type zinc-finger fold.

This is Putative zinc finger MYND domain-containing protein R331 from Acanthamoeba polyphaga (Amoeba).